We begin with the raw amino-acid sequence, 400 residues long: Coenzyme A biosynthesis bifunctional protein CoaBC (400 aa).

The tract at residues 1–190 (MKLNGKHIVV…SQKQDLQGLN (190 aa)) is phosphopantothenoylcysteine decarboxylase. C158 acts as the Proton donor in catalysis. Residues 191-400 (VSITAGPTRE…EIIERYQKTL (210 aa)) form a phosphopantothenate--cysteine ligase region. Residues 273 to 275 (GCA), D279, K289, 305 to 308 (PDII), F324, K338, and K342 contribute to the CTP site.

This sequence in the N-terminal section; belongs to the HFCD (homo-oligomeric flavin containing Cys decarboxylase) superfamily. In the C-terminal section; belongs to the PPC synthetase family. Mg(2+) serves as cofactor. The cofactor is FMN.

The catalysed reaction is N-[(R)-4-phosphopantothenoyl]-L-cysteine + H(+) = (R)-4'-phosphopantetheine + CO2. The enzyme catalyses (R)-4'-phosphopantothenate + L-cysteine + CTP = N-[(R)-4-phosphopantothenoyl]-L-cysteine + CMP + diphosphate + H(+). It functions in the pathway cofactor biosynthesis; coenzyme A biosynthesis; CoA from (R)-pantothenate: step 2/5. The protein operates within cofactor biosynthesis; coenzyme A biosynthesis; CoA from (R)-pantothenate: step 3/5. In terms of biological role, catalyzes two sequential steps in the biosynthesis of coenzyme A. In the first step cysteine is conjugated to 4'-phosphopantothenate to form 4-phosphopantothenoylcysteine. In the second step the latter compound is decarboxylated to form 4'-phosphopantotheine. The protein is Coenzyme A biosynthesis bifunctional protein CoaBC of Haemophilus influenzae (strain ATCC 51907 / DSM 11121 / KW20 / Rd).